The primary structure comprises 431 residues: 3-isopropylmalate dehydratase large subunit (431 aa).

[4Fe-4S] cluster contacts are provided by cysteine 300, cysteine 360, and cysteine 363.

Belongs to the aconitase/IPM isomerase family. LeuC type 2 subfamily. Heterodimer of LeuC and LeuD. It depends on [4Fe-4S] cluster as a cofactor.

It catalyses the reaction (2R,3S)-3-isopropylmalate = (2S)-2-isopropylmalate. It participates in amino-acid biosynthesis; L-leucine biosynthesis; L-leucine from 3-methyl-2-oxobutanoate: step 2/4. Its function is as follows. Catalyzes the isomerization between 2-isopropylmalate and 3-isopropylmalate, via the formation of 2-isopropylmaleate. The sequence is that of 3-isopropylmalate dehydratase large subunit from Sulfurihydrogenibium sp. (strain YO3AOP1).